The primary structure comprises 161 residues: S-ribosylhomocysteine lyase (161 aa).

3 residues coordinate Fe cation: His57, His61, and Cys127.

It belongs to the LuxS family. As to quaternary structure, homodimer. The cofactor is Fe cation.

The enzyme catalyses S-(5-deoxy-D-ribos-5-yl)-L-homocysteine = (S)-4,5-dihydroxypentane-2,3-dione + L-homocysteine. Functionally, involved in the synthesis of autoinducer 2 (AI-2) which is secreted by bacteria and is used to communicate both the cell density and the metabolic potential of the environment. The regulation of gene expression in response to changes in cell density is called quorum sensing. Catalyzes the transformation of S-ribosylhomocysteine (RHC) to homocysteine (HC) and 4,5-dihydroxy-2,3-pentadione (DPD). The sequence is that of S-ribosylhomocysteine lyase from Streptococcus equi subsp. zooepidemicus (strain H70).